The chain runs to 323 residues: Methenyltetrahydromethanopterin cyclohydrolase (323 aa).

Belongs to the MCH family.

It localises to the cytoplasm. The enzyme catalyses 5,10-methenyl-5,6,7,8-tetrahydromethanopterin + H2O = N(5)-formyl-5,6,7,8-tetrahydromethanopterin + H(+). It participates in one-carbon metabolism; methanogenesis from CO(2); 5,10-methenyl-5,6,7,8-tetrahydromethanopterin from CO(2): step 3/3. Functionally, catalyzes the reversible interconversion of 5-formyl-H(4)MPT to methenyl-H(4)MPT(+). This is Methenyltetrahydromethanopterin cyclohydrolase from Methanobrevibacter smithii (strain ATCC 35061 / DSM 861 / OCM 144 / PS).